The chain runs to 173 residues: Bilin biosynthesis protein PecF (173 aa).

The protein belongs to the CpcE/RpcE/PecE family.

In terms of biological role, an enzyme involved in the biosynthesis of bilin. The sequence is that of Bilin biosynthesis protein PecF (pecF) from Nostoc sp. (strain PCC 7120 / SAG 25.82 / UTEX 2576).